Here is a 432-residue protein sequence, read N- to C-terminus: Cyclic 2,3-diphosphoglycerate synthetase (432 aa).

The protein belongs to the cyclic 2,3-diphosphoglycerate synthetase family.

It is found in the cytoplasm. The catalysed reaction is (2R)-2,3-bisphosphoglycerate + ATP + H(+) = cyclic (2R)-2,3-bisphosphoglycerate + ADP + phosphate. Its function is as follows. Catalyzes the formation of cyclic 2,3-diphosphoglycerate (cDPG) by formation of an intramolecular phosphoanhydride bond at the expense of ATP. The chain is Cyclic 2,3-diphosphoglycerate synthetase from Thermococcus kodakarensis (strain ATCC BAA-918 / JCM 12380 / KOD1) (Pyrococcus kodakaraensis (strain KOD1)).